Here is a 244-residue protein sequence, read N- to C-terminus: PF03932 family protein CutC (244 aa).

Belongs to the CutC family.

The protein resides in the cytoplasm. This Pasteurella multocida (strain Pm70) protein is PF03932 family protein CutC.